Reading from the N-terminus, the 608-residue chain is Formate hydrogenlyase subunit 3 (608 aa).

Transmembrane regions (helical) follow at residues 10 to 26 (GVAW…LFSF), 44 to 67 (LYTA…LSLV), 76 to 93 (LNAI…FVSL), 116 to 140 (AAAV…MALC), 153 to 173 (LWFA…WLLW), 197 to 218 (IWLL…HGWV), 229 to 251 (AAAL…LSLL), 258 to 280 (WWGI…YALV), 296 to 312 (IGII…GIAL), 416 to 440 (LAVG…VTFL), 453 to 476 (CAPL…GVAA), and 502 to 521 (MITL…MAIC).

It belongs to the complex I subunit 4 family. In terms of assembly, FHL comprises of a formate dehydrogenase, unidentified electron carriers and a hydrogenase (isoenzyme 3). In this non-energy conserving pathway molecular hydrogen and carbodioxide from formate are released.

It localises to the cell inner membrane. The protein is Formate hydrogenlyase subunit 3 (hycC) of Escherichia coli (strain K12).